A 673-amino-acid polypeptide reads, in one-letter code: Xyloglucan glycosyltransferase 4 (673 aa).

The next 2 membrane-spanning stretches (helical) occupy residues 90–110 and 144–164; these read FIKA…VAHF and IAPL…IQSL. Aspartate 238 is a catalytic residue. Positions 297 and 299 each coordinate substrate. Aspartate 391 is a catalytic residue. The next 2 membrane-spanning stretches (helical) occupy residues 469 to 489 and 494 to 514; these read LILP…TMFI and LPLW…ILPS. A Phosphoserine modification is found at serine 581. 2 consecutive transmembrane segments (helical) span residues 623–643 and 648–668; these read VFKK…RSFL and LHFY…LDLI.

This sequence belongs to the glycosyltransferase 2 family. Plant cellulose synthase-like C subfamily. Homodimer. Interacts with XXT5. Interacts with FUT1, MUR3 and XLT2. As to expression, expressed in seedlings, roots, leaves, stems, flowers and seeds.

Its subcellular location is the golgi apparatus membrane. Functionally, beta-1,4-glucan synthase rather involved in the synthesis of the xyloglucan backbone than cellulose. Seems to work simultaneously with xyloglucan 6-xylosyltransferase. Xyloglucan is a noncellulosic polysaccharides of plant cell wall and consists of a glucan backbone substituted by xylose, galactose and fucose. Associates with other xyloglucan-synthesizing enzymes to form multiprotein complexes for xyloglucan synthesis in the Golgi. In Arabidopsis thaliana (Mouse-ear cress), this protein is Xyloglucan glycosyltransferase 4.